The chain runs to 208 residues: 2,3-bisphosphoglycerate-dependent phosphoglycerate mutase (208 aa).

Substrate is bound by residues 9–16 (RHGQSEWN), 22–23 (TG), Arg61, 88–91 (ERDY), Lys99, 115–116 (RR), and 159–160 (GN). Catalysis depends on His10, which acts as the Tele-phosphohistidine intermediate. The active-site Proton donor/acceptor is the Glu88.

Belongs to the phosphoglycerate mutase family. BPG-dependent PGAM subfamily. As to quaternary structure, homodimer.

It catalyses the reaction (2R)-2-phosphoglycerate = (2R)-3-phosphoglycerate. The protein operates within carbohydrate degradation; glycolysis; pyruvate from D-glyceraldehyde 3-phosphate: step 3/5. Its function is as follows. Catalyzes the interconversion of 2-phosphoglycerate and 3-phosphoglycerate. The sequence is that of 2,3-bisphosphoglycerate-dependent phosphoglycerate mutase from Methylobacterium sp. (strain 4-46).